The sequence spans 313 residues: Putative adhesin P1-like protein MPN_202 (313 aa).

A compositionally biased stretch (low complexity) spans 1 to 16; the sequence is MGSQNQGSTTTTSAGN. The segment at 1-44 is disordered; that stretch reads MGSQNQGSTTTTSAGNPDSLVTDKVDQKGQVQTSGQNLSDTNYT. Residues 29 to 44 show a composition bias toward polar residues; the sequence is GQVQTSGQNLSDTNYT.

Belongs to the adhesin P1 family.

The sequence is that of Putative adhesin P1-like protein MPN_202 from Mycoplasma pneumoniae (strain ATCC 29342 / M129 / Subtype 1) (Mycoplasmoides pneumoniae).